The chain runs to 101 residues: Large ribosomal subunit protein uL24 (101 aa).

It belongs to the universal ribosomal protein uL24 family. In terms of assembly, part of the 50S ribosomal subunit.

In terms of biological role, one of two assembly initiator proteins, it binds directly to the 5'-end of the 23S rRNA, where it nucleates assembly of the 50S subunit. Functionally, one of the proteins that surrounds the polypeptide exit tunnel on the outside of the subunit. The chain is Large ribosomal subunit protein uL24 from Streptococcus thermophilus (strain ATCC BAA-491 / LMD-9).